The following is a 513-amino-acid chain: Probable mannosyl-oligosaccharide alpha-1,2-mannosidase 1B (513 aa).

A signal peptide spans 1-21 (MHLSSLSLSLTALAIVSPSAA). N-linked (GlcNAc...) asparagine glycosylation is found at Asn97, Asn117, Asn184, Asn251, Asn322, Asn348, and Asn368. Cys334 and Cys363 are oxidised to a cystine. Residue Glu377 is the Proton donor of the active site. Thr503 is a binding site for Ca(2+).

This sequence belongs to the glycosyl hydrolase 47 family. As to quaternary structure, monomer. It depends on Ca(2+) as a cofactor. Mg(2+) serves as cofactor.

It is found in the cytoplasmic vesicle lumen. The catalysed reaction is N(4)-(alpha-D-Man-(1-&gt;2)-alpha-D-Man-(1-&gt;2)-alpha-D-Man-(1-&gt;3)-[alpha-D-Man-(1-&gt;2)-alpha-D-Man-(1-&gt;3)-[alpha-D-Man-(1-&gt;2)-alpha-D-Man-(1-&gt;6)]-alpha-D-Man-(1-&gt;6)]-beta-D-Man-(1-&gt;4)-beta-D-GlcNAc-(1-&gt;4)-beta-D-GlcNAc)-L-asparaginyl-[protein] (N-glucan mannose isomer 9A1,2,3B1,2,3) + 4 H2O = N(4)-(alpha-D-Man-(1-&gt;3)-[alpha-D-Man-(1-&gt;3)-[alpha-D-Man-(1-&gt;6)]-alpha-D-Man-(1-&gt;6)]-beta-D-Man-(1-&gt;4)-beta-D-GlcNAc-(1-&gt;4)-beta-D-GlcNAc)-L-asparaginyl-[protein] (N-glucan mannose isomer 5A1,2) + 4 beta-D-mannose. It catalyses the reaction N(4)-(alpha-D-Man-(1-&gt;2)-alpha-D-Man-(1-&gt;2)-alpha-D-Man-(1-&gt;3)-[alpha-D-Man-(1-&gt;3)-[alpha-D-Man-(1-&gt;2)-alpha-D-Man-(1-&gt;6)]-alpha-D-Man-(1-&gt;6)]-beta-D-Man-(1-&gt;4)-beta-D-GlcNAc-(1-&gt;4)-beta-D-GlcNAc)-L-asparaginyl-[protein] (N-glucan mannose isomer 8A1,2,3B1,3) + 3 H2O = N(4)-(alpha-D-Man-(1-&gt;3)-[alpha-D-Man-(1-&gt;3)-[alpha-D-Man-(1-&gt;6)]-alpha-D-Man-(1-&gt;6)]-beta-D-Man-(1-&gt;4)-beta-D-GlcNAc-(1-&gt;4)-beta-D-GlcNAc)-L-asparaginyl-[protein] (N-glucan mannose isomer 5A1,2) + 3 beta-D-mannose. It functions in the pathway protein modification; protein glycosylation. Involved in the maturation of Asn-linked oligosaccharides. Progressively trims alpha-1,2-linked mannose residues from Man(9)GlcNAc(2) to produce Man(5)GlcNAc(2). The polypeptide is Probable mannosyl-oligosaccharide alpha-1,2-mannosidase 1B (mns1B) (Aspergillus niger (strain ATCC MYA-4892 / CBS 513.88 / FGSC A1513)).